The sequence spans 373 residues: XK-related protein 9 (373 aa).

A run of 8 helical transmembrane segments spans residues 8 to 28 (FMMSVLGIIIYVTDLVADIVL), 38 to 58 (YVLGVLTLSFVLCGTLIVHCF), 166 to 186 (MVIMVSCCAISWSTVDYQIAL), 206 to 226 (LFYKLLTLLSWMLSVVLLLFV), 230 to 250 (VALLLLLFLWITGFIWAFINH), 256 to 276 (SVSMEFLYRIVVGFILVFTFF), 295 to 315 (VLGTLGILTVFWIYPLSIFNS), and 318 to 338 (FIPISATIVLALLLGIIFLGV).

It belongs to the XK family. Undergoes proteolytic processing by caspase-3 (CASP3), caspase-6 (CASP6) and caspase-7 (CASP7) to generate the XK-related protein 9, processed form, leading to its activation. As to expression, highly expressed in the small intestines; weakly expressed in the pancreas, liver, stomach, and large intestines.

Its subcellular location is the cell membrane. The catalysed reaction is a 1,2-diacyl-sn-glycero-3-phospho-L-serine(in) = a 1,2-diacyl-sn-glycero-3-phospho-L-serine(out). Its activity is regulated as follows. Activated upon caspase cleavage to generate the XK-related protein 9, processed form. Does not act prior the onset of apoptosis. Phospholipid scramblase that promotes phosphatidylserine exposure on apoptotic cell surface. Phosphatidylserine is a specific marker only present at the surface of apoptotic cells and acts as a specific signal for engulfment. In Mus musculus (Mouse), this protein is XK-related protein 9.